Reading from the N-terminus, the 82-residue chain is Cytochrome b559 subunit alpha (82 aa).

The helical transmembrane segment at V21–W35 threads the bilayer. H23 is a heme binding site.

Belongs to the PsbE/PsbF family. In terms of assembly, heterodimer of an alpha subunit and a beta subunit. PSII is composed of 1 copy each of membrane proteins PsbA, PsbB, PsbC, PsbD, PsbE, PsbF, PsbH, PsbI, PsbJ, PsbK, PsbL, PsbM, PsbT, PsbX, PsbY, PsbZ, Psb30/Ycf12, peripheral proteins PsbO, CyanoQ (PsbQ), PsbU, PsbV and a large number of cofactors. It forms dimeric complexes. Requires heme b as cofactor.

It is found in the cellular thylakoid membrane. This b-type cytochrome is tightly associated with the reaction center of photosystem II (PSII). PSII is a light-driven water:plastoquinone oxidoreductase that uses light energy to abstract electrons from H(2)O, generating O(2) and a proton gradient subsequently used for ATP formation. It consists of a core antenna complex that captures photons, and an electron transfer chain that converts photonic excitation into a charge separation. This chain is Cytochrome b559 subunit alpha, found in Nostoc sp. (strain PCC 7120 / SAG 25.82 / UTEX 2576).